The chain runs to 340 residues: Uridine nucleosidase (340 aa).

The active site involves His-254.

Belongs to the IUNH family.

The protein localises to the cytoplasm. Its subcellular location is the nucleus. It catalyses the reaction uridine + H2O = D-ribose + uracil. Functionally, also acts on cytidine. The sequence is that of Uridine nucleosidase (URH1) from Saccharomyces cerevisiae (strain ATCC 204508 / S288c) (Baker's yeast).